Reading from the N-terminus, the 318-residue chain is Aspartate carbamoyltransferase catalytic subunit (318 aa).

Carbamoyl phosphate contacts are provided by Arg-58 and Thr-59. Lys-86 contacts L-aspartate. Arg-108, His-141, and Gln-144 together coordinate carbamoyl phosphate. Arg-174 and Arg-226 together coordinate L-aspartate. Carbamoyl phosphate-binding residues include Gly-270 and Pro-271.

Belongs to the aspartate/ornithine carbamoyltransferase superfamily. ATCase family. Heterododecamer (2C3:3R2) of six catalytic PyrB chains organized as two trimers (C3), and six regulatory PyrI chains organized as three dimers (R2).

It carries out the reaction carbamoyl phosphate + L-aspartate = N-carbamoyl-L-aspartate + phosphate + H(+). The protein operates within pyrimidine metabolism; UMP biosynthesis via de novo pathway; (S)-dihydroorotate from bicarbonate: step 2/3. Functionally, catalyzes the condensation of carbamoyl phosphate and aspartate to form carbamoyl aspartate and inorganic phosphate, the committed step in the de novo pyrimidine nucleotide biosynthesis pathway. The chain is Aspartate carbamoyltransferase catalytic subunit from Lactobacillus acidophilus (strain ATCC 700396 / NCK56 / N2 / NCFM).